Consider the following 747-residue polypeptide: Mediator of RNA polymerase II transcription subunit 25 (747 aa).

Residues 1–226 (MVPGSEGPAR…PRHMVLVRGL (226 aa)) are interaction with the Mediator complex. Disordered regions lie at residues 233-274 (GSAP…QYQV) and 299-390 (LGPR…PALG). Pro residues-rich tracts occupy residues 263-272 (QPLPPVPPQY) and 326-342 (PQLP…PPAS). The interval 389–543 (LGGQQSVSNK…VNGIRQVITN (155 aa)) is interaction with VP16. The tract at residues 395 to 545 (VSNKLLAWSG…GIRQVITNHK (151 aa)) is interaction with CREBBP. Residues 548–747 (QQQKLEQQQR…MEDDILMDLI (200 aa)) are disordered. Interaction with RARA regions lie at residues 564-653 (APPG…LLNP) and 640-707 (PGAN…WPAQ). A compositionally biased stretch (low complexity) spans 598 to 611 (ASGATGQPQPQGTA). The span at 612 to 634 (QPPPGAPQGPPGAASGPPPPGPI) shows a compositional bias: pro residues. Residues 646–650 (LRSLL) carry the LXXLL motif motif. Pro residues-rich tracts occupy residues 652 to 664 (NPPP…PPPQ), 673 to 683 (PGAPALLPPPH), and 691 to 713 (LGPP…PRAP). Residue Arg-725 is modified to Asymmetric dimethylarginine. The segment covering 738-747 (MEDDILMDLI) has biased composition (acidic residues).

The protein belongs to the Mediator complex subunit 25 family. As to quaternary structure, component of the Mediator complex, which is composed of MED1, MED4, MED6, MED7, MED8, MED9, MED10, MED11, MED12, MED13, MED13L, MED14, MED15, MED16, MED17, MED18, MED19, MED20, MED21, MED22, MED23, MED24, MED25, MED26, MED27, MED29, MED30, MED31, CCNC, CDK8 and CDC2L6/CDK11. The MED12, MED13, CCNC and CDK8 subunits form a distinct module termed the CDK8 module. Mediator containing the CDK8 module is less active than Mediator lacking this module in supporting transcriptional activation. Individual preparations of the Mediator complex lacking one or more distinct subunits have been variously termed ARC, CRSP, DRIP, PC2, SMCC and TRAP. Interacts with CREBBP. Interacts with ESR1, GR, RARA, RXRA and THRB in a ligand-dependent fashion. Binds the Herpes simplex virus activator VP16. In terms of tissue distribution, ubiquitously expressed. Highest levels in brain, heart, kidney, peripheral leukocytes, placenta, skeletal muscle and spleen.

Its subcellular location is the nucleus. Functionally, component of the Mediator complex, a coactivator involved in the regulated transcription of nearly all RNA polymerase II-dependent genes. Mediator functions as a bridge to convey information from gene-specific regulatory proteins to the basal RNA polymerase II transcription machinery. Mediator is recruited to promoters by direct interactions with regulatory proteins and serves as a scaffold for the assembly of a functional preinitiation complex with RNA polymerase II and the general transcription factors. Required for RARA/RXRA-mediated transcription. This chain is Mediator of RNA polymerase II transcription subunit 25 (MED25), found in Homo sapiens (Human).